Here is a 468-residue protein sequence, read N- to C-terminus: Peroxisome proliferator-activated receptor alpha (468 aa).

The nuclear receptor DNA-binding region spans 99-173; the sequence is NIECRICGDK…VGMSHNAIRF (75 aa). 2 consecutive NR C4-type zinc fingers follow at residues 102-122 and 139-161; these read CRIC…CEGC and CDRS…FHKC. The region spanning 239-466 is the NR LBD domain; sequence FVIHDMETLC…HPLLQEIYRD (228 aa). Indeglitazar is bound by residues Ser-280, Tyr-314, and Tyr-464. A required for heterodimerization with RXRA region spans residues 304-433; that stretch reads DQVTLLKYGV…PKLLQKMADL (130 aa).

The protein belongs to the nuclear hormone receptor family. NR1 subfamily. Heterodimer; with RXRA. This heterodimerization is required for DNA binding and transactivation activity. Interacts with NCOA3 coactivator. Interacts with CITED2; the interaction stimulates its transcriptional activity. Also interacts with PPARBP in vitro. Interacts with AKAP13, LPIN1, PRDM16 and coactivator NCOA6. Interacts with ASXL1 and ASXL2. Interacts with PER2. Interacts with SIRT1; the interaction seems to be modulated by NAD(+) levels. Interacts with CRY1 and CRY2. In hepatocytes, interacts with PAQR3 and HUWE1; the interactions promote PPARA poylubiquitination and HUWE1-mediated degradation. Ubiquitinated by E3 ubiquitin-protein ligase HUWE1; leading to proteasomal degradation. Post-translationally, phosphorylated. In terms of tissue distribution, skeletal muscle, liver, heart and kidney. Expressed in monocytes.

It is found in the nucleus. Ligand-activated transcription factor. Key regulator of lipid metabolism. Activated by the endogenous ligand 1-palmitoyl-2-oleoyl-sn-glycerol-3-phosphocholine (16:0/18:1-GPC). Activated by oleylethanolamide, a naturally occurring lipid that regulates satiety. Receptor for peroxisome proliferators such as hypolipidemic drugs and fatty acids. Regulates the peroxisomal beta-oxidation pathway of fatty acids. Functions as a transcription activator for the ACOX1 and P450 genes. Transactivation activity requires heterodimerization with RXRA and is antagonized by NR2C2. May be required for the propagation of clock information to metabolic pathways regulated by PER2. The sequence is that of Peroxisome proliferator-activated receptor alpha (PPARA) from Homo sapiens (Human).